A 326-amino-acid polypeptide reads, in one-letter code: L-threo-3-hydroxyaspartate ammonia-lyase (326 aa).

K53 bears the N6-(pyridoxal phosphate)lysine mark. Pyridoxal 5'-phosphate contacts are provided by residues N80, 179-183, and S304; that span reads GGGGL.

This sequence belongs to the serine/threonine dehydratase family. Monomer. It depends on pyridoxal 5'-phosphate as a cofactor. Requires Mn(2+) as cofactor. The cofactor is Mg(2+). Ca(2+) is required as a cofactor.

The catalysed reaction is (3S)-3-hydroxy-L-aspartate = oxaloacetate + NH4(+). Is strongly inhibited by hydroxylamine and EDTA in vitro. Functionally, catalyzes the deamination of L-threo-3-hydroxyaspartate to oxaloacetate and ammonia. Shows a high specificity towards L-threo-3-hydroxyaspartate as other 3-hydroxyaminoacids, i.e. D,L-erythro- and D-threo-3-hydroxyaspartate, D-threonine, L-threonine, D,L-allothreonine, D-serine, and L-serine, are not substrates for this enzyme. Exhibits no detectable serine racemase activity. Is responsible for the 3-hydroxyaspartate resistance of S.cerevisiae, and thus may be involved in the detoxification of naturally occurring 3-hydroxyaspartate. This chain is L-threo-3-hydroxyaspartate ammonia-lyase (SRY1), found in Saccharomyces cerevisiae (strain ATCC 204508 / S288c) (Baker's yeast).